The primary structure comprises 477 residues: Bifunctional protein HldE (477 aa).

The segment at 1–318 (MKVNLPAFER…ENAVRGRAAT (318 aa)) is ribokinase. Residue 195-198 (NLSE) participates in ATP binding. The active site involves Asp264. The cytidylyltransferase stretch occupies residues 344-477 (MTNGVFDILH…IKKIQTESEK (134 aa)).

It in the N-terminal section; belongs to the carbohydrate kinase PfkB family. In the C-terminal section; belongs to the cytidylyltransferase family. In terms of assembly, homodimer.

The catalysed reaction is D-glycero-beta-D-manno-heptose 7-phosphate + ATP = D-glycero-beta-D-manno-heptose 1,7-bisphosphate + ADP + H(+). The enzyme catalyses D-glycero-beta-D-manno-heptose 1-phosphate + ATP + H(+) = ADP-D-glycero-beta-D-manno-heptose + diphosphate. Its pathway is nucleotide-sugar biosynthesis; ADP-L-glycero-beta-D-manno-heptose biosynthesis; ADP-L-glycero-beta-D-manno-heptose from D-glycero-beta-D-manno-heptose 7-phosphate: step 1/4. It participates in nucleotide-sugar biosynthesis; ADP-L-glycero-beta-D-manno-heptose biosynthesis; ADP-L-glycero-beta-D-manno-heptose from D-glycero-beta-D-manno-heptose 7-phosphate: step 3/4. Its function is as follows. Catalyzes the phosphorylation of D-glycero-D-manno-heptose 7-phosphate at the C-1 position to selectively form D-glycero-beta-D-manno-heptose-1,7-bisphosphate. Catalyzes the ADP transfer from ATP to D-glycero-beta-D-manno-heptose 1-phosphate, yielding ADP-D-glycero-beta-D-manno-heptose. The polypeptide is Bifunctional protein HldE (Salmonella arizonae (strain ATCC BAA-731 / CDC346-86 / RSK2980)).